The primary structure comprises 320 residues: Mitochondrial thiamine pyrophosphate carrier (320 aa).

Solcar repeat units lie at residues 13–106 (NTKL…LTEL), 116–202 (REFS…LKHL), and 214–309 (NENL…FCNV). Residues 19 to 39 (AVAGSVSGLVTRALISPFDVI) form a helical membrane-spanning segment. Phosphoserine is present on S51. The next 4 helical transmembrane spans lie at 87 to 107 (ILSI…TELV), 122 to 142 (FVCG…VDVL), 173 to 193 (VFYK…GLQF), and 220 to 240 (LLCG…LDLF). The Substrate recognition motif lies at 241–246 (KKRLQV). Residues 293 to 313 (ALSTGFMFFWYEFFCNVFHCM) form a helical membrane-spanning segment.

This sequence belongs to the mitochondrial carrier (TC 2.A.29) family.

The protein resides in the mitochondrion membrane. It carries out the reaction thiamine phosphate(out) + thiamine diphosphate(in) = thiamine phosphate(in) + thiamine diphosphate(out). Functionally, mitochondrial transporter mediating uptake of thiamine diphosphate into mitochondria. It is not clear if the antiporter activity is affected by the membrane potential or by the proton electrochemical gradient. The polypeptide is Mitochondrial thiamine pyrophosphate carrier (SLC25A19) (Macaca fascicularis (Crab-eating macaque)).